Reading from the N-terminus, the 193-residue chain is Fra a 1-associated protein (193 aa).

The disordered stretch occupies residues 1–27; that stretch reads MGWVWKDDDEQGGHVNPSAADISPRLD.

Interacts with FRAA1E, FRAA2 and FRAA3.

In Fragaria ananassa (Strawberry), this protein is Fra a 1-associated protein.